The sequence spans 239 residues: MNSVLFLTLAVCSSLAYGKEFVATVRQNYKENINQLLEQQIQKELAASYIYQAYASYFQRADVSLPGIKKFFSDASSEERDDAQSLIDYINQRGGHVQYDKIDLKDACETVMKFVTSDTSGLEEFRDRRMCICGFVATKTINDNCGERSDWKEGLIAFEDTLAIERYVNAQLLDIHKKADDEKDAHLTHILEHEFLEEQVSSINKIAHAITRLRSFEQGSGNNYKLGRVYLRPTPQISH.

The signal sequence occupies residues 1–18; sequence MNSVLFLTLAVCSSLAYG. In terms of domain architecture, Ferritin-like diiron spans 27 to 217; that stretch reads QNYKENINQL…HAITRLRSFE (191 aa). Fe cation contacts are provided by Glu-44 and Glu-79. The tract at residues 105–146 is insertion; not present in other ferritins; it reads KDACETVMKFVTSDTSGLEEFRDRRMCICGFVATKTINDNCG. Positions 165 and 199 each coordinate Fe cation.

The protein belongs to the ferritin family. In terms of assembly, oligomer of 12 or 24 subunits. The functional molecule is roughly spherical and contains a central cavity into which the polymeric ferric iron core is deposited. As to expression, midgut gland and bloodstream.

The protein localises to the secreted. It catalyses the reaction 4 Fe(2+) + O2 + 4 H(+) = 4 Fe(3+) + 2 H2O. Stores iron in a soluble, non-toxic, readily available form. Important for iron homeostasis. Has ferroxidase activity. Iron is taken up in the ferrous form and deposited as ferric hydroxides after oxidation. This is Yolk ferritin from Lymnaea stagnalis (Great pond snail).